The chain runs to 361 residues: sn-glycerol-3-phosphate import ATP-binding protein UgpC (361 aa).

An ABC transporter domain is found at 4–235 (LSLKGIRKSY…PETVFVAGFI (232 aa)). 37–44 (GPSGCGKS) provides a ligand contact to ATP.

It belongs to the ABC transporter superfamily. sn-glycerol-3-phosphate importer (TC 3.A.1.1.3) family. The complex is composed of two ATP-binding proteins (UgpC), two transmembrane proteins (UgpA and UgpE) and a solute-binding protein (UgpB).

Its subcellular location is the cell inner membrane. The catalysed reaction is sn-glycerol 3-phosphate(out) + ATP + H2O = sn-glycerol 3-phosphate(in) + ADP + phosphate + H(+). Functionally, part of the ABC transporter complex UgpBAEC involved in sn-glycerol-3-phosphate (G3P) import. Responsible for energy coupling to the transport system. This chain is sn-glycerol-3-phosphate import ATP-binding protein UgpC, found in Burkholderia ambifaria (strain ATCC BAA-244 / DSM 16087 / CCUG 44356 / LMG 19182 / AMMD) (Burkholderia cepacia (strain AMMD)).